The primary structure comprises 84 residues: Double gene block protein 2 (84 aa).

Residues 1–4 lie on the Lumenal side of the membrane; that stretch reads MPSA. A helical membrane pass occupies residues 5–25; that stretch reads NLHPIVLTGVIGLMLLIRLRC. Residues 26–30 are Cytoplasmic-facing; the sequence is TFTST. Residues 31–51 form a helical membrane-spanning segment; that stretch reads FSLPPLVTLNQIIALSFCGLL. Residues 52 to 84 are Lumenal-facing; it reads LNSISRAERACYYNYSVDSSKQQHISISTPNGK.

It belongs to the carmovirus double gene block protein 2 family.

The protein resides in the host endoplasmic reticulum membrane. Its function is as follows. Cell-to-cell movement function. The polypeptide is Double gene block protein 2 (Carnation mottle virus (isolate China/Shanghai) (CarMV)).